The following is a 286-amino-acid chain: Pre-mRNA-processing protein 45 (286 aa).

Disordered regions lie at residues 111–146 (TNDI…SSSK) and 253–286 (KQRN…RRRY). Residues 132 to 145 (PNQEQQQQSSSSSS) are compositionally biased toward low complexity. The span at 253–279 (KQRNEIRQQKQLQEKRLRDEKIKEIAN) shows a compositional bias: basic and acidic residues.

It belongs to the SNW family. Associated with the spliceosome.

The protein localises to the nucleus. Functionally, involved in pre-mRNA splicing. The protein is Pre-mRNA-processing protein 45 (PRP45) of Candida albicans (strain SC5314 / ATCC MYA-2876) (Yeast).